Consider the following 900-residue polypeptide: Nuclear factor NF-kappa-B p100 subunit (900 aa).

Residues Ser-23 and Ser-161 each carry the phosphoserine modification. Residues 38-343 (PYLVIVEQPK…EVQRKRRKAL (306 aa)) enclose the RHD domain. The Nuclear localization signal signature appears at 337-341 (RKRRK). The segment at 346-377 (FSQPFGGGSHMGGGSGGAAGGYGGAGGGGSLG) is GRR. The segment at 404-435 (GAQMAATVPSRDSGEEAAEPSAPSRTPQCEPQ) is disordered. Thr-429 bears the Phosphothreonine mark. ANK repeat units lie at residues 487–519 (NGDTPLHLAIIHGQTSVIEQIVYVIHHAQDLGV), 526–555 (LHQTPLHLAVITGQTSVVSFLLRVGADPAL), 559–591 (HGDSAMHLALRAGAGAPELLRALLQSGAPAVPQ), 599–628 (EGLYPVHLAVRARSPECLDLLVDSGAEVEA), 633–663 (GGRTALHLATEMEELGLVTHLVTKLRANVNA), and 667–696 (AGNTPLHLAAGLGYPTLTRLLLKAGADIHA). Residues 698–734 (NEEPLCPLPSPPTSDSDSDSEGPEKDTRSSFRGHTPL) form a disordered region. Phosphoserine is present on residues Ser-713, Ser-715, and Ser-717. Residues 729–758 (RGHTPLDLTCSTKVKTLLLNAAQNTMEPPL) form an ANK 7 repeat. Residues 764 to 851 (AGPGLSLGDT…EGVRLLRGPE (88 aa)) form the Death domain. Ser-812 bears the Phosphoserine mark. Positions 849–866 (GPETRDKLPSTAEVKEDS) are enriched in basic and acidic residues. Residues 849–900 (GPETRDKLPSTAEVKEDSAYGSQSVEQEAEKLGPPPEPPGGLCHGHPQPQVH) are disordered. Residue Lys-855 forms a Glycyl lysine isopeptide (Lys-Gly) (interchain with G-Cter in ubiquitin) linkage. Phosphoserine; by MAP3K14 is present on residues Ser-866 and Ser-870. Positions 888–900 (GGLCHGHPQPQVH) are enriched in low complexity.

In terms of assembly, component of the NF-kappa-B RelB-p52 complex. Homodimer; component of the NF-kappa-B p52-p52 complex. Component of the NF-kappa-B p65-p52 complex. Component of the NF-kappa-B p52-c-Rel complex. NFKB2/p52 interacts with NFKBIE. Component of a complex consisting of the NF-kappa-B p50-p50 homodimer and BCL3. Directly interacts with MEN1. While translation occurs, the particular unfolded structure after the GRR repeat promotes the generation of p52 making it an acceptable substrate for the proteasome. This process is known as cotranslational processing. The processed form is active and the unprocessed form acts as an inhibitor (I kappa B-like), being able to form cytosolic complexes with NF-kappa B, trapping it in the cytoplasm. Complete folding of the region downstream of the GRR repeat precludes processing. In terms of processing, subsequent to MAP3K14-dependent serine phosphorylation, p100 polyubiquitination occurs then triggering its proteasome-dependent processing. Post-translationally, constitutive processing is tightly suppressed by its C-terminal processing inhibitory domain, named PID, which contains the death domain. Ubiquitinated by TRIM55; leading to processing by VCP and subsequent ubiquitin-dependent protein degradation by the proteasome.

The protein resides in the nucleus. Its subcellular location is the cytoplasm. Its function is as follows. NF-kappa-B is a pleiotropic transcription factor present in almost all cell types and is the endpoint of a series of signal transduction events that are initiated by a vast array of stimuli related to many biological processes such as inflammation, immunity, differentiation, cell growth, tumorigenesis and apoptosis. NF-kappa-B is a homo- or heterodimeric complex formed by the Rel-like domain-containing proteins RELA/p65, RELB, NFKB1/p105, NFKB1/p50, REL and NFKB2/p52. The dimers bind at kappa-B sites in the DNA of their target genes and the individual dimers have distinct preferences for different kappa-B sites that they can bind with distinguishable affinity and specificity. Different dimer combinations act as transcriptional activators or repressors, respectively. NF-kappa-B is controlled by various mechanisms of post-translational modification and subcellular compartmentalization as well as by interactions with other cofactors or corepressors. NF-kappa-B complexes are held in the cytoplasm in an inactive state complexed with members of the NF-kappa-B inhibitor (I-kappa-B) family. In a conventional activation pathway, I-kappa-B is phosphorylated by I-kappa-B kinases (IKKs) in response to different activators, subsequently degraded thus liberating the active NF-kappa-B complex which translocates to the nucleus. In a non-canonical activation pathway, the MAP3K14-activated CHUK/IKKA homodimer phosphorylates NFKB2/p100 associated with RelB, inducing its proteolytic processing to NFKB2/p52 and the formation of NF-kappa-B RelB-p52 complexes. The NF-kappa-B heterodimeric RelB-p52 complex is a transcriptional activator. The NF-kappa-B p52-p52 homodimer is a transcriptional repressor. NFKB2 appears to have dual functions such as cytoplasmic retention of attached NF-kappa-B proteins by p100 and generation of p52 by a cotranslational processing. The proteasome-mediated process ensures the production of both p52 and p100 and preserves their independent function. p52 binds to the kappa-B consensus sequence 5'-GGRNNYYCC-3', located in the enhancer region of genes involved in immune response and acute phase reactions. p52 and p100 are respectively the minor and major form; the processing of p100 being relatively poor. Isoform p49 is a subunit of the NF-kappa-B protein complex, which stimulates the HIV enhancer in synergy with p65. In concert with RELB, regulates the circadian clock by repressing the transcriptional activator activity of the CLOCK-BMAL1 heterodimer. This chain is Nuclear factor NF-kappa-B p100 subunit (NFKB2), found in Homo sapiens (Human).